Consider the following 787-residue polypeptide: Endonuclease MutS2 (787 aa).

Residue 334-341 (GPNTGGKT) coordinates ATP. The region spanning 712-787 (LDLRGKRYEE…GNGATIVTFK (76 aa)) is the Smr domain.

The protein belongs to the DNA mismatch repair MutS family. MutS2 subfamily. Homodimer. Binds to stalled ribosomes, contacting rRNA.

Its function is as follows. Endonuclease that is involved in the suppression of homologous recombination and thus may have a key role in the control of bacterial genetic diversity. Functionally, acts as a ribosome collision sensor, splitting the ribosome into its 2 subunits. Detects stalled/collided 70S ribosomes which it binds and splits by an ATP-hydrolysis driven conformational change. Acts upstream of the ribosome quality control system (RQC), a ribosome-associated complex that mediates the extraction of incompletely synthesized nascent chains from stalled ribosomes and their subsequent degradation. Probably generates substrates for RQC. The chain is Endonuclease MutS2 from Latilactobacillus sakei subsp. sakei (strain 23K) (Lactobacillus sakei subsp. sakei).